Here is a 54-residue protein sequence, read N- to C-terminus: Relaxin (54 aa).

Glutamine 1 is subject to Pyrrolidone carboxylic acid. 3 disulfides stabilise this stretch: cysteine 13/cysteine 41, cysteine 25/cysteine 54, and cysteine 40/cysteine 45.

This sequence belongs to the insulin family. In terms of assembly, heterodimer of a B chain and an A chain linked by two disulfide bonds.

It is found in the secreted. The function of relaxin in an oviparous species is not yet known. This is Relaxin from Squalus acanthias (Spiny dogfish).